Reading from the N-terminus, the 434-residue chain is GTPase Obg (434 aa).

The Obg domain maps to 1 to 158 (MFIDRAKIYV…RWLYLELKLL (158 aa)). The region spanning 159–328 (ADVGLLGLPN…LLELMEKYVK (170 aa)) is the OBG-type G domain. Residues 165-172 (GLPNAGKS), 190-194 (FTTKT), 211-214 (DIPG), 280-283 (NKID), and 309-311 (SAK) each bind GTP. Serine 172 and threonine 192 together coordinate Mg(2+). An OCT domain is found at 347-425 (KQENKKQEIP…IGNYVFKYNS (79 aa)).

The protein belongs to the TRAFAC class OBG-HflX-like GTPase superfamily. OBG GTPase family. Monomer. Mg(2+) serves as cofactor.

The protein localises to the cytoplasm. Its function is as follows. An essential GTPase which binds GTP, GDP and possibly (p)ppGpp with moderate affinity, with high nucleotide exchange rates and a fairly low GTP hydrolysis rate. Plays a role in control of the cell cycle, stress response, ribosome biogenesis and in those bacteria that undergo differentiation, in morphogenesis control. This chain is GTPase Obg, found in Dictyoglomus turgidum (strain DSM 6724 / Z-1310).